Reading from the N-terminus, the 191-residue chain is Cathelicidin-related peptide Oh-Cath (191 aa).

Positions 1–22 (MEGFFWKTLLVVGALAIGGTSS) are cleaved as a signal peptide. The propeptide occupies 23–161 (LPHKPLTYEE…DQPRRVKRFK (139 aa)). 2 disulfide bridges follow: C81/C92 and C103/C120. The segment covering 125–151 (EEEEQKQEEGNEEEKEVEKEEKEEDEK) has biased composition (acidic residues). The tract at residues 125–154 (EEEEQKQEEGNEEEKEVEKEEKEEDEKDQP) is disordered.

This sequence belongs to the cathelicidin family. As to expression, expressed by the venom gland.

It localises to the secreted. The protein resides in the target cell membrane. Its function is as follows. Potent antimicrobial peptide against Gram-negative (MIC=0.25 ug/ml against E.coli ATCC 25922, MIC=0.5 ug/ml against P.aeruginosa) and Gram-positive bacteria (MIC=64 ug/ml against E.faecalis, MIC=64 ug/ml against S.aureus). Adopts an amphipathic alpha helical conformation, that may allow to partition into the target membrane. Low hemolytic activities have been observed on mammalian cells. This chain is Cathelicidin-related peptide Oh-Cath, found in Ophiophagus hannah (King cobra).